The sequence spans 283 residues: 4-diphosphocytidyl-2-C-methyl-D-erythritol kinase (283 aa).

K12 is an active-site residue. 99–109 is an ATP binding site; that stretch reads PLAAGIGGGSA. D141 is an active-site residue.

The protein belongs to the GHMP kinase family. IspE subfamily.

It catalyses the reaction 4-CDP-2-C-methyl-D-erythritol + ATP = 4-CDP-2-C-methyl-D-erythritol 2-phosphate + ADP + H(+). It functions in the pathway isoprenoid biosynthesis; isopentenyl diphosphate biosynthesis via DXP pathway; isopentenyl diphosphate from 1-deoxy-D-xylulose 5-phosphate: step 3/6. Catalyzes the phosphorylation of the position 2 hydroxy group of 4-diphosphocytidyl-2C-methyl-D-erythritol. The protein is 4-diphosphocytidyl-2-C-methyl-D-erythritol kinase of Sphingopyxis alaskensis (strain DSM 13593 / LMG 18877 / RB2256) (Sphingomonas alaskensis).